Here is a 487-residue protein sequence, read N- to C-terminus: Protein nucleotidyltransferase YdiU (487 aa).

Positions 90, 92, 93, 113, 125, 126, 176, and 183 each coordinate ATP. Residue aspartate 252 is the Proton acceptor of the active site. Positions 253 and 262 each coordinate Mg(2+). Aspartate 262 serves as a coordination point for ATP.

The protein belongs to the SELO family. Requires Mg(2+) as cofactor. It depends on Mn(2+) as a cofactor.

The catalysed reaction is L-seryl-[protein] + ATP = 3-O-(5'-adenylyl)-L-seryl-[protein] + diphosphate. It catalyses the reaction L-threonyl-[protein] + ATP = 3-O-(5'-adenylyl)-L-threonyl-[protein] + diphosphate. The enzyme catalyses L-tyrosyl-[protein] + ATP = O-(5'-adenylyl)-L-tyrosyl-[protein] + diphosphate. It carries out the reaction L-histidyl-[protein] + UTP = N(tele)-(5'-uridylyl)-L-histidyl-[protein] + diphosphate. The catalysed reaction is L-seryl-[protein] + UTP = O-(5'-uridylyl)-L-seryl-[protein] + diphosphate. It catalyses the reaction L-tyrosyl-[protein] + UTP = O-(5'-uridylyl)-L-tyrosyl-[protein] + diphosphate. Nucleotidyltransferase involved in the post-translational modification of proteins. It can catalyze the addition of adenosine monophosphate (AMP) or uridine monophosphate (UMP) to a protein, resulting in modifications known as AMPylation and UMPylation. In Pseudomonas savastanoi pv. phaseolicola (strain 1448A / Race 6) (Pseudomonas syringae pv. phaseolicola (strain 1448A / Race 6)), this protein is Protein nucleotidyltransferase YdiU.